Reading from the N-terminus, the 297-residue chain is Beta-glucoside kinase (297 aa).

5–11 (AFDIGGT) is an ATP binding site.

It belongs to the ROK (NagC/XylR) family. Homotetramer.

The enzyme catalyses D-cellobiose + ATP = 6-phospho-beta-D-glucosyl-(1-&gt;4)-D-glucose + ADP + H(+). Is inhibited by N-ethylmaleimide in vitro, but ATP affords considerable protection against the inhibitor. Its function is as follows. Catalyzes the ATP-dependent phosphorylation of a wide variety of beta-D-glucosides, to produce 6-phospho-beta-D-glucosides including cellobiose-6'-P, gentiobiose-6'-P, cellobiitol-6-P, salicin-6-P, and arbutin-6-P. Is not able to phosphorylate alpha-D-glucosides. May have a dual role of kinase and transcriptional regulator of the cellobiose-PTS operon. The chain is Beta-glucoside kinase (bglK) from Klebsiella pneumoniae.